We begin with the raw amino-acid sequence, 91 residues long: Small ribosomal subunit protein bS20 (91 aa).

The protein belongs to the bacterial ribosomal protein bS20 family.

Its function is as follows. Binds directly to 16S ribosomal RNA. This chain is Small ribosomal subunit protein bS20, found in Caulobacter sp. (strain K31).